The primary structure comprises 68 residues: DNA-directed RNA polymerase subunit omega (68 aa).

It belongs to the RNA polymerase subunit omega family. In terms of assembly, the RNAP catalytic core consists of 2 alpha, 1 beta, 1 beta' and 1 omega subunit. When a sigma factor is associated with the core the holoenzyme is formed, which can initiate transcription.

It carries out the reaction RNA(n) + a ribonucleoside 5'-triphosphate = RNA(n+1) + diphosphate. Promotes RNA polymerase assembly. Latches the N- and C-terminal regions of the beta' subunit thereby facilitating its interaction with the beta and alpha subunits. The protein is DNA-directed RNA polymerase subunit omega of Dechloromonas aromatica (strain RCB).